The primary structure comprises 742 residues: Conidiogenone synthase (742 aa).

Residues 1-332 (MGETIADVYA…SLCVPRYFKV (332 aa)) are terpene cyclase. Residue Asp-97 coordinates Mg(2+). Residues Asp-97, 190–193 (RIVD), Asn-234, 238–242 (SWDKE), and 328–329 (RY) each bind substrate. Residues 97-101 (DDETD) carry the DDXXD 1 motif. Positions 234-242 (NDLFSWDKE) match the NSE/DTE motif. The tract at residues 333–742 (ERNPYKDHLE…LRAMEEASQK (410 aa)) is prenyltransferase. Residues Lys-414, Arg-417, and His-446 each contribute to the isopentenyl diphosphate site. Residues Asp-453 and Asp-457 each coordinate Mg(2+). Positions 453–457 (DDIQD) match the DDXXD 2 motif. Arg-462 contributes to the dimethylallyl diphosphate binding site. Arg-463 serves as a coordination point for isopentenyl diphosphate. Dimethylallyl diphosphate contacts are provided by Lys-539, Thr-540, Gln-575, Asn-582, Lys-592, and Lys-602. The segment at 701–724 (EAHKSDSAWKVNQRRAWKGSQKNG) is disordered.

It in the N-terminal section; belongs to the terpene synthase family. The protein in the C-terminal section; belongs to the FPP/GGPP synthase family. In terms of assembly, hexamer. Mg(2+) is required as a cofactor.

The enzyme catalyses isopentenyl diphosphate + (2E,6E)-farnesyl diphosphate = (2E,6E,10E)-geranylgeranyl diphosphate + diphosphate. Its pathway is secondary metabolite biosynthesis; terpenoid biosynthesis. Functionally, bifunctional terpene synthase; part of the gene cluster that mediates the biosynthesis of conidiogenone, a diterpene known to induce the conidiation. The bifunctional terpene synthase PrDS converts isopentenyl diphosphate (IPP) and dimethylallyl diphosphate (DMAPP) into deoxyconidiogenol. The C-terminal prenyltransferase (PT) domain of PrDS catalyzes formation of GGPP, whereas the N-terminal terpene cyclase (TC) domain catalyzes the cyclization of GGPP into deoxyconidiogenol. The cytochrome P450 monooxygenase PrP450 then catalyzes two rounds of oxidation to furnish conidiogenone. The polypeptide is Conidiogenone synthase (Penicillium roqueforti (strain FM164)).